A 20-amino-acid chain; its full sequence is GSLVKLVSTLLSLVPSLMKG.

Position 18 is a methionine sulfoxide; in form U1-PONTX-Dq3c (Met18). Lys19 carries the lysine amide; in form U1-PONTX-Dq3a and U1-PONTX-Dq3c modification.

The peptide spanning residues 2 to 19 occurs in 3 forms and has been given 3 different names. U1-PONTX-Dq3a has an amidated Lys-19, U1-PONTX-Dq3c has an amidated Lys-19 and an oxidized Met-18, and U1-PONTX-Dq3b has no modifications at either Met-18 or Lys-19. Expressed by the venom gland.

It localises to the secreted. In terms of biological role, may have antimicrobial properties, like most ant linear peptides. This chain is Poneritoxin, found in Dinoponera quadriceps (South American ant).